The chain runs to 155 residues: SsrA-binding protein (155 aa).

Belongs to the SmpB family.

It is found in the cytoplasm. Functionally, required for rescue of stalled ribosomes mediated by trans-translation. Binds to transfer-messenger RNA (tmRNA), required for stable association of tmRNA with ribosomes. tmRNA and SmpB together mimic tRNA shape, replacing the anticodon stem-loop with SmpB. tmRNA is encoded by the ssrA gene; the 2 termini fold to resemble tRNA(Ala) and it encodes a 'tag peptide', a short internal open reading frame. During trans-translation Ala-aminoacylated tmRNA acts like a tRNA, entering the A-site of stalled ribosomes, displacing the stalled mRNA. The ribosome then switches to translate the ORF on the tmRNA; the nascent peptide is terminated with the 'tag peptide' encoded by the tmRNA and targeted for degradation. The ribosome is freed to recommence translation, which seems to be the essential function of trans-translation. This is SsrA-binding protein from Moorella thermoacetica (strain ATCC 39073 / JCM 9320).